Here is a 231-residue protein sequence, read N- to C-terminus: 5'-methylthioadenosine/S-adenosylhomocysteine nucleosidase (231 aa).

Catalysis depends on Glu12, which acts as the Proton acceptor. Residues Gly78, Ile153, and 174–175 (ME) each bind substrate. Asp198 acts as the Proton donor in catalysis.

Belongs to the PNP/UDP phosphorylase family. MtnN subfamily.

The enzyme catalyses S-adenosyl-L-homocysteine + H2O = S-(5-deoxy-D-ribos-5-yl)-L-homocysteine + adenine. It catalyses the reaction S-methyl-5'-thioadenosine + H2O = 5-(methylsulfanyl)-D-ribose + adenine. It carries out the reaction 5'-deoxyadenosine + H2O = 5-deoxy-D-ribose + adenine. The protein operates within amino-acid biosynthesis; L-methionine biosynthesis via salvage pathway; S-methyl-5-thio-alpha-D-ribose 1-phosphate from S-methyl-5'-thioadenosine (hydrolase route): step 1/2. Catalyzes the irreversible cleavage of the glycosidic bond in both 5'-methylthioadenosine (MTA) and S-adenosylhomocysteine (SAH/AdoHcy) to adenine and the corresponding thioribose, 5'-methylthioribose and S-ribosylhomocysteine, respectively. Also cleaves 5'-deoxyadenosine, a toxic by-product of radical S-adenosylmethionine (SAM) enzymes, into 5-deoxyribose and adenine. The polypeptide is 5'-methylthioadenosine/S-adenosylhomocysteine nucleosidase (Maridesulfovibrio salexigens (strain ATCC 14822 / DSM 2638 / NCIMB 8403 / VKM B-1763) (Desulfovibrio salexigens)).